The sequence spans 734 residues: Photosystem I P700 chlorophyll a apoprotein A2 (734 aa).

Transmembrane regions (helical) follow at residues 46–69 (IFAS…FHVA), 135–158 (LYTG…LHLQ), 175–199 (LNHH…HVAI), 273–291 (MAHH…GHMY), 330–353 (LHFQ…QHMY), 369–395 (AALY…IFFI), 417–439 (AIIS…LYVH), and 517–535 (FLVH…LILV). [4Fe-4S] cluster contacts are provided by C559 and C568. 2 helical membrane-spanning segments follow: residues 575–596 (AFYL…YWHW) and 643–665 (LSVW…MFLI). Residues H654, M662, and Y670 each coordinate chlorophyll a. Position 671 (W671) interacts with phylloquinone. A helical membrane pass occupies residues 707-727 (LVGLAHFSVGYIFTYAAFLIA).

This sequence belongs to the PsaA/PsaB family. In terms of assembly, the PsaA/B heterodimer binds the P700 chlorophyll special pair and subsequent electron acceptors. PSI consists of a core antenna complex that captures photons, and an electron transfer chain that converts photonic excitation into a charge separation. The eukaryotic PSI reaction center is composed of at least 11 subunits. Requires P700 is a chlorophyll a/chlorophyll a' dimer, A0 is one or more chlorophyll a, A1 is one or both phylloquinones and FX is a shared 4Fe-4S iron-sulfur center. as cofactor.

It localises to the plastid. The protein resides in the chloroplast thylakoid membrane. The enzyme catalyses reduced [plastocyanin] + hnu + oxidized [2Fe-2S]-[ferredoxin] = oxidized [plastocyanin] + reduced [2Fe-2S]-[ferredoxin]. PsaA and PsaB bind P700, the primary electron donor of photosystem I (PSI), as well as the electron acceptors A0, A1 and FX. PSI is a plastocyanin-ferredoxin oxidoreductase, converting photonic excitation into a charge separation, which transfers an electron from the donor P700 chlorophyll pair to the spectroscopically characterized acceptors A0, A1, FX, FA and FB in turn. Oxidized P700 is reduced on the lumenal side of the thylakoid membrane by plastocyanin. The chain is Photosystem I P700 chlorophyll a apoprotein A2 from Spinacia oleracea (Spinach).